Reading from the N-terminus, the 215-residue chain is Programmed cell death protein 10 homolog (215 aa).

Belongs to the PDCD10 family. As to quaternary structure, interacts with gck-1. In terms of tissue distribution, expressed in pharynx, intestine, germline, vulva and excretory canals.

The protein resides in the cytoplasm. Its subcellular location is the apical cell membrane. In terms of biological role, involved in excretory canal elongation during postembryonic development. Plays a role in promoting Golgi stability, ER integrity and vesicle transport probably by regulating the activation of Rho GTPase cdc-42. Involved in fertility. This Caenorhabditis elegans protein is Programmed cell death protein 10 homolog.